Reading from the N-terminus, the 178-residue chain is Large ribosomal subunit protein uL6 (178 aa).

It belongs to the universal ribosomal protein uL6 family. Part of the 50S ribosomal subunit.

Its function is as follows. This protein binds to the 23S rRNA, and is important in its secondary structure. It is located near the subunit interface in the base of the L7/L12 stalk, and near the tRNA binding site of the peptidyltransferase center. The polypeptide is Large ribosomal subunit protein uL6 (Lactiplantibacillus plantarum (strain ATCC BAA-793 / NCIMB 8826 / WCFS1) (Lactobacillus plantarum)).